The primary structure comprises 89 residues: Large ribosomal subunit protein bL27 (89 aa).

Residues 1-20 (MAHKKAGGSSRNGRDSESKR) are disordered.

It belongs to the bacterial ribosomal protein bL27 family.

This Bartonella bacilliformis (strain ATCC 35685 / KC583 / Herrer 020/F12,63) protein is Large ribosomal subunit protein bL27.